The chain runs to 373 residues: Probable jasmonic acid carboxyl methyltransferase 1 (373 aa).

Tyr-18 contributes to the S-adenosyl-L-homocysteine binding site. Residue Gln-25 participates in jasmonate binding. S-adenosyl-L-homocysteine-binding residues include Cys-59, Asn-64, Asp-96, Leu-97, Ser-135, and Phe-136. Positions 156 and 157 each coordinate jasmonate. The Mg(2+) site is built by Asn-174, Asp-260, Phe-262, and Asn-263.

It belongs to the methyltransferase superfamily. Type-7 methyltransferase family. Mg(2+) serves as cofactor.

The protein resides in the cytoplasm. It is found in the nucleus. It catalyses the reaction jasmonate + S-adenosyl-L-methionine = methyl (-)-jasmonate + S-adenosyl-L-homocysteine. The protein operates within lipid metabolism; oxylipin biosynthesis. Functionally, catalyzes the methylation of jasmonate into methyljasmonate, a plant volatile that acts as an important cellular regulator mediating diverse developmental processes and defense responses. This Theobroma cacao (Cacao) protein is Probable jasmonic acid carboxyl methyltransferase 1.